We begin with the raw amino-acid sequence, 209 residues long: Thymidylate kinase (209 aa).

10–17 (GPEGAGKT) serves as a coordination point for ATP.

It belongs to the thymidylate kinase family.

It carries out the reaction dTMP + ATP = dTDP + ADP. Phosphorylation of dTMP to form dTDP in both de novo and salvage pathways of dTTP synthesis. In Anoxybacillus flavithermus (strain DSM 21510 / WK1), this protein is Thymidylate kinase.